The chain runs to 557 residues: Eudesmanediol synthase (557 aa).

Residues Asp-310 and Asp-314 each coordinate Mg(2+). Substrate contacts are provided by Asp-310, Asp-314, Arg-450, and Asn-453. Positions 310–314 (DDTFD) match the DDXXD motif motif. 2 residues coordinate Mg(2+): Asn-453 and Ser-457.

This sequence belongs to the terpene synthase family. In terms of assembly, monomer. Mg(2+) is required as a cofactor. Requires Mn(2+) as cofactor. In terms of tissue distribution, specifically expressed in roots.

It localises to the cytoplasm. It carries out the reaction (2E,6E)-farnesyl diphosphate + 2 H2O = 7-epi-ent-eudesmane-5,11-diol + diphosphate. It participates in secondary metabolite biosynthesis; terpenoid biosynthesis. Component of the volatile terpenes biosynthesis pathways. Dihydroxylated sesquiterpenoid synthase that generates dually hydroxylated products directly from (E,E)-farnesyl diphosphate, primarily eudesmane-2,11-diol, along with two closely related structural isomers. The chain is Eudesmanediol synthase from Zea mays (Maize).